A 278-amino-acid chain; its full sequence is Large ribosomal subunit protein uL24m (278 aa).

The KOW domain occupies 109 to 142 (FFPGDLVQVMVGKDKGRQGLVLTISRDSSEVVVD).

It belongs to the universal ribosomal protein uL24 family.

The protein localises to the mitochondrion. The sequence is that of Large ribosomal subunit protein uL24m (mrpl-24) from Caenorhabditis briggsae.